We begin with the raw amino-acid sequence, 571 residues long: Proline--tRNA ligase (571 aa).

This sequence belongs to the class-II aminoacyl-tRNA synthetase family. ProS type 1 subfamily. In terms of assembly, homodimer.

The protein resides in the cytoplasm. The enzyme catalyses tRNA(Pro) + L-proline + ATP = L-prolyl-tRNA(Pro) + AMP + diphosphate. Catalyzes the attachment of proline to tRNA(Pro) in a two-step reaction: proline is first activated by ATP to form Pro-AMP and then transferred to the acceptor end of tRNA(Pro). As ProRS can inadvertently accommodate and process non-cognate amino acids such as alanine and cysteine, to avoid such errors it has two additional distinct editing activities against alanine. One activity is designated as 'pretransfer' editing and involves the tRNA(Pro)-independent hydrolysis of activated Ala-AMP. The other activity is designated 'posttransfer' editing and involves deacylation of mischarged Ala-tRNA(Pro). The misacylated Cys-tRNA(Pro) is not edited by ProRS. The polypeptide is Proline--tRNA ligase (Thermodesulfovibrio yellowstonii (strain ATCC 51303 / DSM 11347 / YP87)).